The primary structure comprises 376 residues: Phytanoyl-CoA hydroxylase-interacting protein-like (376 aa).

Residues 52 to 161 (VPHNIKISNI…EIIEFCTADY (110 aa)) enclose the Fibronectin type-III domain.

It belongs to the PHYHIP family.

May play a role in the development of the central system. This is Phytanoyl-CoA hydroxylase-interacting protein-like (phyhipl) from Xenopus laevis (African clawed frog).